A 33-amino-acid chain; its full sequence is MSDINATRLPIWGIGCNPSVGDEVTALLTSGEA.

Residues 1-10 constitute a propeptide that is removed on maturation; the sequence is MSDINATRLP. I11 carries the (3R,4R)-4,5-dihydroxyisoleucine; in form alpha-amanitin modification. I11 carries the post-translational modification (3R,4S)-4-hydroxyisoleucine; in form gamma-amanitin. Positions 11–18 form a cross-link, cyclopeptide (Ile-Pro); it reads IWGIGCNP. Positions 12 to 16 form a cross-link, 2'-cysteinyl-6'-hydroxytryptophan sulfoxide (Trp-Cys); it reads WGIGC. Residue P18 is modified to 4-hydroxyproline. The propeptide occupies 19–33; the sequence is SVGDEVTALLTSGEA.

The protein belongs to the MSDIN fungal toxin family. In terms of processing, processed by the macrocyclase-peptidase enzyme POPB to yield a toxic cyclic decapeptide. POPB first removes 10 residues from the N-terminus. Conformational trapping of the remaining peptide forces the enzyme to release this intermediate rather than proceed to macrocyclization. The enzyme rebinds the remaining peptide in a different conformation and catalyzes macrocyclization of the N-terminal 8 residues.

Functionally, major toxin belonging to the bicyclic octapeptides amatoxins that acts by binding non-competitively to RNA polymerase II and greatly slowing the elongation of transcripts from target promoters. The polypeptide is Alpha-amanitin proprotein (Amanita fuliginea (East Asian brown death cap)).